A 333-amino-acid polypeptide reads, in one-letter code: MATLKEKLMTPVAAASAVPSSKITVVGVGQVGMACAVSILGKGLCDELALVDVLEDKLKGEMMDLQHGSLFLQTHKIVADKDYAVTANSKIVVVTAGVRQQEGESRLNLVQRNVGVFKGIIPQIVKYSPNCTILVVSNPVDILTYVTWKLSGLPKHRVIGSGCNLDTARFRYLMAERLGIHPTSCHGWILGEHGDSSVAVWSGVNVAGVSLQELNPAMGTDKDSENWKEVHKQVVESAYEVIRLKGYTNWAIGLSVAELCETMLKNLCRVHSVSTLVKGTYGIENDVFLSLPCVLSASGLTSVINQKLKDDEVAQLKKSADTLWSIQKDLKDM.

NAD(+) contacts are provided by residues 29–57 and R99; that span reads GQVG…LEDK. Residues R106, N138, and R169 each contribute to the substrate site. N138 serves as a coordination point for NAD(+). The Proton acceptor role is filled by H193. T248 is a binding site for substrate.

The protein belongs to the LDH/MDH superfamily. LDH family. In terms of assembly, homotetramer.

Its subcellular location is the cytoplasm. It carries out the reaction (S)-lactate + NAD(+) = pyruvate + NADH + H(+). The protein operates within fermentation; pyruvate fermentation to lactate; (S)-lactate from pyruvate: step 1/1. Functionally, interconverts simultaneously and stereospecifically pyruvate and lactate with concomitant interconversion of NADH and NAD(+). In Anas platyrhynchos (Mallard), this protein is L-lactate dehydrogenase B chain (LDHB).